A 200-amino-acid chain; its full sequence is Oligoribonuclease (200 aa).

An Exonuclease domain is found at M5–L169. Residue Y126 is part of the active site.

This sequence belongs to the oligoribonuclease family.

It is found in the cytoplasm. 3'-to-5' exoribonuclease specific for small oligoribonucleotides. The polypeptide is Oligoribonuclease (Streptomyces avermitilis (strain ATCC 31267 / DSM 46492 / JCM 5070 / NBRC 14893 / NCIMB 12804 / NRRL 8165 / MA-4680)).